Reading from the N-terminus, the 368-residue chain is 4-hydroxy-3-methylbut-2-en-1-yl diphosphate synthase (flavodoxin) (368 aa).

Residues Cys268, Cys271, Cys303, and Glu310 each contribute to the [4Fe-4S] cluster site.

Belongs to the IspG family. [4Fe-4S] cluster is required as a cofactor.

It carries out the reaction (2E)-4-hydroxy-3-methylbut-2-enyl diphosphate + oxidized [flavodoxin] + H2O + 2 H(+) = 2-C-methyl-D-erythritol 2,4-cyclic diphosphate + reduced [flavodoxin]. It participates in isoprenoid biosynthesis; isopentenyl diphosphate biosynthesis via DXP pathway; isopentenyl diphosphate from 1-deoxy-D-xylulose 5-phosphate: step 5/6. Converts 2C-methyl-D-erythritol 2,4-cyclodiphosphate (ME-2,4cPP) into 1-hydroxy-2-methyl-2-(E)-butenyl 4-diphosphate. This is 4-hydroxy-3-methylbut-2-en-1-yl diphosphate synthase (flavodoxin) from Listeria monocytogenes serovar 1/2a (strain ATCC BAA-679 / EGD-e).